A 191-amino-acid chain; its full sequence is Signal peptidase complex catalytic subunit sec11 (191 aa).

The Cytoplasmic segment spans residues 1–18; that stretch reads MLSALGGNLSNARQSIAQ. A helical; Signal-anchor for type II membrane protein membrane pass occupies residues 19 to 39; sequence VLNFALVLSTAFMLWKGVSIA. Over 40 to 191 the chain is Lumenal; sequence SNSSSPIVVV…MGLMVILQRE (152 aa). A glycan (N-linked (GlcNAc...) asparagine) is linked at N41. Active-site charge relay system residues include S53, H92, and D133. A C-terminal short (CTS) helix region spans residues 177 to 188; the sequence is VLLGVMGLMVIL.

This sequence belongs to the peptidase S26B family. Component of the signal peptidase complex (SPC) composed of a catalytic subunit SEC11 and three accessory subunits SPC1, SPC2 and SPC3. The complex induces a local thinning of the ER membrane which is used to measure the length of the signal peptide (SP) h-region of protein substrates. This ensures the selectivity of the complex towards h-regions shorter than 18-20 amino acids. SPC associates with the translocon complex.

The protein resides in the endoplasmic reticulum membrane. It catalyses the reaction Cleavage of hydrophobic, N-terminal signal or leader sequences from secreted and periplasmic proteins.. Its function is as follows. Catalytic component of the signal peptidase complex (SPC) which catalyzes the cleavage of N-terminal signal sequences from nascent proteins as they are translocated into the lumen of the endoplasmic reticulum. Specifically cleaves N-terminal signal peptides that contain a hydrophobic alpha-helix (h-region) shorter than 18-20 amino acids. This Talaromyces marneffei (strain ATCC 18224 / CBS 334.59 / QM 7333) (Penicillium marneffei) protein is Signal peptidase complex catalytic subunit sec11 (sec11).